The sequence spans 92 residues: Small ribosomal subunit protein uS19c (92 aa).

Belongs to the universal ribosomal protein uS19 family.

Its subcellular location is the plastid. The protein localises to the chloroplast. Protein S19 forms a complex with S13 that binds strongly to the 16S ribosomal RNA. The protein is Small ribosomal subunit protein uS19c of Tupiella akineta (Green alga).